Reading from the N-terminus, the 243-residue chain is PHO85 cyclin-like protein psl1 (243 aa).

Residues 211–224 show a composition bias toward polar residues; it reads ESPISHTPQQNQQD. The disordered stretch occupies residues 211–231; it reads ESPISHTPQQNQQDEQPRRPI.

This sequence belongs to the cyclin family. PHO80 subfamily. In terms of assembly, forms a cyclin-CDK complex with pef1.

It is found in the cytoplasm. The protein resides in the nucleus. Cyclin partner of the cyclin-dependent kinase (CDK) pef1 (PHO85 homolog). In Schizosaccharomyces pombe (strain 972 / ATCC 24843) (Fission yeast), this protein is PHO85 cyclin-like protein psl1 (psl1).